The following is a 407-amino-acid chain: Phenazine 1,6-dicarboxylic acid hydroxylase PhzS (407 aa).

Residues glycine 17, valine 134, and aspartate 313 each contribute to the FAD site.

FAD serves as cofactor.

The enzyme catalyses phenazine-1,6-dicarboxylate + NADH + O2 + 2 H(+) = 6-hydroxyphenazine-1-carboxylate + CO2 + NAD(+) + H2O. It carries out the reaction 6-hydroxyphenazine-1-carboxylate + NADH + O2 + 2 H(+) = 1,6-dihydroxyphenazine + CO2 + NAD(+) + H2O. It catalyses the reaction phenazine-1-carboxylate + NADH + O2 + 2 H(+) = 1-hydroxyphenazine + CO2 + NAD(+) + H2O. Involved in the biosynthesis of phenazine natural products including myxin, an N(5),N(10)-dioxide phenazine antiobiotic, which has antimicrobial activity. Catalyzes the decarboxylative hydroxylations of phenazine 1,6-dicarboxylic acid (PDC) to produce 1,6-dihydroxyphenazine (DHP). Low activity with phenazine 1-carboxylic acid (PCA) to produce 1-hydroxyphenazine. This is Phenazine 1,6-dicarboxylic acid hydroxylase PhzS from Lysobacter antibioticus.